We begin with the raw amino-acid sequence, 250 residues long: Small ribosomal subunit protein uS2 (250 aa).

This sequence belongs to the universal ribosomal protein uS2 family.

The sequence is that of Small ribosomal subunit protein uS2 from Delftia acidovorans (strain DSM 14801 / SPH-1).